We begin with the raw amino-acid sequence, 153 residues long: Ribonuclease H (153 aa).

Residues 1-142 form the RNase H type-1 domain; the sequence is MTPEVVIYTD…ADALARKGLS (142 aa). Mg(2+) is bound by residues D10, E48, D70, and D134.

It belongs to the RNase H family. In terms of assembly, monomer. Requires Mg(2+) as cofactor.

Its subcellular location is the cytoplasm. It catalyses the reaction Endonucleolytic cleavage to 5'-phosphomonoester.. In terms of biological role, endonuclease that specifically degrades the RNA of RNA-DNA hybrids. The polypeptide is Ribonuclease H (Phenylobacterium zucineum (strain HLK1)).